Here is a 618-residue protein sequence, read N- to C-terminus: DNA mismatch repair protein MutL (618 aa).

Over residues 366 to 378 (AEPTAAREPATPR) the composition is skewed to low complexity. The tract at residues 366–403 (AEPTAAREPATPRYSDGASGGNGGRQSAGGWPHAQPGY) is disordered. Over residues 383 to 392 (ASGGNGGRQS) the composition is skewed to gly residues.

This sequence belongs to the DNA mismatch repair MutL/HexB family.

In terms of biological role, this protein is involved in the repair of mismatches in DNA. It is required for dam-dependent methyl-directed DNA mismatch repair. May act as a 'molecular matchmaker', a protein that promotes the formation of a stable complex between two or more DNA-binding proteins in an ATP-dependent manner without itself being part of a final effector complex. This chain is DNA mismatch repair protein MutL, found in Salmonella typhi.